We begin with the raw amino-acid sequence, 396 residues long: 1-deoxy-D-xylulose 5-phosphate reductoisomerase (396 aa).

Residues threonine 10, glycine 11, serine 12, isoleucine 13, glycine 36, lysine 37, asparagine 38, and asparagine 124 each contribute to the NADPH site. Lysine 125 lines the 1-deoxy-D-xylulose 5-phosphate pocket. Glutamate 126 is an NADPH binding site. Aspartate 150 is a Mn(2+) binding site. 4 residues coordinate 1-deoxy-D-xylulose 5-phosphate: serine 151, glutamate 152, serine 186, and histidine 209. Glutamate 152 is a Mn(2+) binding site. Glycine 215 serves as a coordination point for NADPH. 1-deoxy-D-xylulose 5-phosphate contacts are provided by serine 222, asparagine 227, lysine 228, and glutamate 231. A Mn(2+)-binding site is contributed by glutamate 231.

This sequence belongs to the DXR family. Requires Mg(2+) as cofactor. Mn(2+) is required as a cofactor.

It catalyses the reaction 2-C-methyl-D-erythritol 4-phosphate + NADP(+) = 1-deoxy-D-xylulose 5-phosphate + NADPH + H(+). It functions in the pathway isoprenoid biosynthesis; isopentenyl diphosphate biosynthesis via DXP pathway; isopentenyl diphosphate from 1-deoxy-D-xylulose 5-phosphate: step 1/6. Its function is as follows. Catalyzes the NADPH-dependent rearrangement and reduction of 1-deoxy-D-xylulose-5-phosphate (DXP) to 2-C-methyl-D-erythritol 4-phosphate (MEP). The polypeptide is 1-deoxy-D-xylulose 5-phosphate reductoisomerase (Actinobacillus pleuropneumoniae serotype 3 (strain JL03)).